The chain runs to 339 residues: Protein FAM76B (339 aa).

An N-acetylalanine modification is found at A2. Phosphoserine is present on residues S22 and S148. The disordered stretch occupies residues 144 to 243 (EQRKSLGSSH…INQSADSGGT (100 aa)). A compositionally biased stretch (low complexity) spans 148-160 (SLGSSHSNSSSSS). Basic residues predominate over residues 167–189 (HHPKHHHHHHHHHHRHSSSHHKI). The residue at position 193 (S193) is a Phosphoserine. Position 215 is a phosphothreonine (T215). The segment covering 215-224 (TPKKKPKLES) has biased composition (basic and acidic residues). Residues 228–243 (NGDSSSINQSADSGGT) are compositionally biased toward polar residues. The stretch at 248-328 (LISQLKEEVM…QVAALSKGKK (81 aa)) forms a coiled coil.

Belongs to the FAM76 family. As to quaternary structure, interacts with HNRNPA2B1 (via C-terminus); the interaction results in retention of HNRNPA2B1 in the nucleus and inhibition of the NF-kappa-B-mediated inflammatory pathway.

It is found in the nucleus speckle. Its function is as follows. Negatively regulates the NF-kappa-B-mediated inflammatory pathway by preventing the translocation of HNRNPA2B1 from the nucleus to the cytoplasm. Inhibits the PI3K/Akt/NF-kappa-B pathway-mediated polarization of M1 macrophages by binding to and stabilizing PIK3CD mRNA, resulting in increased levels of PIK3CD protein and increased levels of phosphorylated downstream target AKT which leads to decreased NF-kappa-B signaling. This chain is Protein FAM76B (FAM76B), found in Homo sapiens (Human).